A 141-amino-acid chain; its full sequence is Putative pre-16S rRNA nuclease (141 aa).

It belongs to the YqgF nuclease family.

It is found in the cytoplasm. In terms of biological role, could be a nuclease involved in processing of the 5'-end of pre-16S rRNA. This is Putative pre-16S rRNA nuclease from Coxiella burnetii (strain RSA 331 / Henzerling II).